A 249-amino-acid polypeptide reads, in one-letter code: Segregation and condensation protein A (249 aa).

Belongs to the ScpA family. Component of a cohesin-like complex composed of ScpA, ScpB and the Smc homodimer, in which ScpA and ScpB bind to the head domain of Smc. The presence of the three proteins is required for the association of the complex with DNA.

The protein resides in the cytoplasm. Participates in chromosomal partition during cell division. May act via the formation of a condensin-like complex containing Smc and ScpB that pull DNA away from mid-cell into both cell halves. The polypeptide is Segregation and condensation protein A (Oceanobacillus iheyensis (strain DSM 14371 / CIP 107618 / JCM 11309 / KCTC 3954 / HTE831)).